We begin with the raw amino-acid sequence, 574 residues long: Zinc finger and BTB domain-containing protein 3 (574 aa).

The BTB domain occupies C74–G142. 2 disordered regions span residues A175–E277 and S305–P346. Glycyl lysine isopeptide (Lys-Gly) (interchain with G-Cter in SUMO2) cross-links involve residues K181 and K182. A compositionally biased stretch (polar residues) spans N187 to T212. Residues P323–P334 are compositionally biased toward low complexity. S362 carries the phosphoserine modification. The tract at residues E364–A403 is disordered. C2H2-type zinc fingers lie at residues P472 to H494 and Y500 to H523. Over residues D526–P535 the composition is skewed to basic and acidic residues. The tract at residues D526–I574 is disordered. A Glycyl lysine isopeptide (Lys-Gly) (interchain with G-Cter in SUMO2) cross-link involves residue K532. Phosphoserine is present on S549.

The protein resides in the nucleus. May be involved in transcriptional regulation. The protein is Zinc finger and BTB domain-containing protein 3 (ZBTB3) of Homo sapiens (Human).